The chain runs to 451 residues: Phenylalanine-4-hydroxylase (451 aa).

Serine 16 bears the Phosphoserine; by PKA mark. Positions 35–113 (SLIFSLKEEV…TVHELSRDKK (79 aa)) constitute an ACT domain. Residues histidine 284, histidine 289, and glutamate 329 each contribute to the Fe cation site.

Belongs to the biopterin-dependent aromatic amino acid hydroxylase family. As to quaternary structure, homodimer and homotetramer. It depends on Fe(2+) as a cofactor. Phosphorylation at Ser-16 increases basal activity and facilitates activation by the substrate phenylalanine.

The enzyme catalyses (6R)-L-erythro-5,6,7,8-tetrahydrobiopterin + L-phenylalanine + O2 = (4aS,6R)-4a-hydroxy-L-erythro-5,6,7,8-tetrahydrobiopterin + L-tyrosine. It functions in the pathway amino-acid degradation; L-phenylalanine degradation; acetoacetate and fumarate from L-phenylalanine: step 1/6. N-terminal region of PAH is thought to contain allosteric binding sites for phenylalanine and to constitute an 'inhibitory' domain that regulates the activity of a catalytic domain in the C-terminal portion of the molecule. Its function is as follows. Catalyzes the hydroxylation of L-phenylalanine to L-tyrosine. The sequence is that of Phenylalanine-4-hydroxylase (PAH) from Bos taurus (Bovine).